Reading from the N-terminus, the 245-residue chain is Probable phosphatase Spro_1934 (245 aa).

Zn(2+)-binding residues include H7, H9, H15, H40, E73, H101, H131, D192, and H194.

It belongs to the PHP family. In terms of assembly, homotrimer. It depends on Zn(2+) as a cofactor.

This chain is Probable phosphatase Spro_1934, found in Serratia proteamaculans (strain 568).